Here is a 69-residue protein sequence, read N- to C-terminus: Alpha-conotoxin SrIA/SrIB (69 aa).

Residues 1 to 21 (MGMRMMFTVFLLVVLATTVVS) form the signal peptide. Positions 22–48 (FTSDSAFDSRNVAANDKVSDMIALTAR) are excised as a propeptide. 2 disulfides stabilise this stretch: cysteine 51/cysteine 57 and cysteine 52/cysteine 65. Residues 53-55 (SRP) are ser-Xaa-Pro motif, crucial for potent interaction with nAChR. Proline 55 is modified (4-hydroxyproline; in form Sr1A and Sr1B). 4-carboxyglutamate; in form Sr1A is present on glutamate 60. The residue at position 63 (glutamate 63) is a 4-carboxyglutamate; in form Sr1A and Sr1B. Glycine 66 is subject to Glycine amide; in form Sr1A and Sr1B.

The protein belongs to the conotoxin A superfamily. Post-translationally, occurs in 2 forms which differ in the post-translational modification of Glu-60. In form SrA1 Glu-60 is 4-carboxyglutamate while in form SrA2 Glu-60 is unmodified. As to expression, expressed by the venom duct.

The protein localises to the secreted. Alpha-conotoxins act on postsynaptic membranes, they bind to the nicotinic acetylcholine receptors (nAChR) and thus inhibit them. Has weak blocking effects on muscle nAChR composed of alpha-1/beta-1/gamma/delta subunits and the central nervous system nAChR composed of alpha-4/beta-2 subunits. Does not detectably affect the peripheral nervous system nAChR composed of alpha-3/beta-4 subunits. Low toxin concentrations potentiate currents in muscle nAChR composed of alpha-1/beta-1/gamma/delta subunits and central nervous system nAChR composed of alpha-4/beta-2 subunits, but not the peripheral nervous system nAChR composed of alpha-3/beta-4 subunits. The protein is Alpha-conotoxin SrIA/SrIB of Conus spurius (Alphabet cone).